The sequence spans 414 residues: Arginine deiminase (414 aa).

C402 serves as the catalytic Amidino-cysteine intermediate.

The protein belongs to the arginine deiminase family.

Its subcellular location is the cytoplasm. The enzyme catalyses L-arginine + H2O = L-citrulline + NH4(+). It functions in the pathway amino-acid degradation; L-arginine degradation via ADI pathway; carbamoyl phosphate from L-arginine: step 1/2. In Oenococcus oeni (strain ATCC BAA-331 / PSU-1), this protein is Arginine deiminase.